We begin with the raw amino-acid sequence, 335 residues long: Ketol-acid reductoisomerase (NAD(P)(+)) (335 aa).

The KARI N-terminal Rossmann domain occupies 2–182 (AKIYKDEDIS…GCARAGVIES (181 aa)). Residues 25–28 (YGSQ), R49, S53, and 83–86 (DMVQ) each bind NADP(+). The active site involves H108. G134 contacts NADP(+). One can recognise a KARI C-terminal knotted domain in the interval 183 to 328 (TFKEETETDL…RKLREMMFRG (146 aa)). The Mg(2+) site is built by D191, E195, E227, and E231. Substrate is bound at residue S252.

The protein belongs to the ketol-acid reductoisomerase family. Homodimer. Mg(2+) is required as a cofactor.

It catalyses the reaction (2R)-2,3-dihydroxy-3-methylbutanoate + NAD(+) = (2S)-2-acetolactate + NADH + H(+). It carries out the reaction (2R)-2,3-dihydroxy-3-methylbutanoate + NADP(+) = (2S)-2-acetolactate + NADPH + H(+). Its pathway is amino-acid biosynthesis; L-isoleucine biosynthesis; L-isoleucine from 2-oxobutanoate: step 2/4. It participates in amino-acid biosynthesis; L-valine biosynthesis; L-valine from pyruvate: step 2/4. In terms of biological role, involved in the biosynthesis of branched-chain amino acids (BCAA). Catalyzes an alkyl-migration followed by a ketol-acid reduction of (S)-2-acetolactate (S2AL) to yield (R)-2,3-dihydroxy-isovalerate. In the isomerase reaction, S2AL is rearranged via a Mg-dependent methyl migration to produce 3-hydroxy-3-methyl-2-ketobutyrate (HMKB). In the reductase reaction, this 2-ketoacid undergoes a metal-dependent reduction by NADPH or NADH to yield (R)-2,3-dihydroxy-isovalerate. The polypeptide is Ketol-acid reductoisomerase (NAD(P)(+)) (Ignisphaera aggregans (strain DSM 17230 / JCM 13409 / AQ1.S1)).